Reading from the N-terminus, the 598-residue chain is Sulfoacetaldehyde acetyltransferase (598 aa).

The protein belongs to the TPP enzyme family. In terms of assembly, homotetramer. The cofactor is Mg(2+). Thiamine diphosphate is required as a cofactor.

The protein localises to the cytoplasm. It carries out the reaction acetyl phosphate + sulfite + H(+) = sulfoacetaldehyde + phosphate. It functions in the pathway organosulfur degradation; taurine degradation via aerobic pathway; acetyl phosphate and sulfite from taurine: step 2/2. In Castellaniella defragrans (Alcaligenes defragrans), this protein is Sulfoacetaldehyde acetyltransferase.